Reading from the N-terminus, the 358-residue chain is Ornithine cyclodeaminase (358 aa).

L-ornithine is bound by residues Arg52 and Lys76. NAD(+) contacts are provided by residues Thr91, Arg119, 146–147 (AQ), Asp168, Thr208, 231–234 (VGGD), Lys238, and Ser299. An L-ornithine-binding site is contributed by Arg119. Asp234 lines the L-ornithine pocket. Asp234 serves as the catalytic Proton donor/acceptor. Val300 serves as a coordination point for L-ornithine.

Belongs to the ornithine cyclodeaminase/mu-crystallin family. NAD(+) serves as cofactor.

It catalyses the reaction L-ornithine = L-proline + NH4(+). The protein operates within amino-acid biosynthesis; L-proline biosynthesis; L-proline from L-ornithine: step 1/1. Its function is as follows. Catalyzes the conversion of L-ornithine into L-proline with release of ammonia. The polypeptide is Ornithine cyclodeaminase (Brucella suis biovar 1 (strain 1330)).